Reading from the N-terminus, the 396-residue chain is NAD(P)H oxidoreductase RTN4IP1, mitochondrial (396 aa).

The N-terminal 40 residues, 1 to 40 (MEFLKTCVLRRNACTAVCFWRSKVVQKPSVRRISTTSPRS), are a transit peptide targeting the mitochondrion. An Enoyl reductase (ER) domain is found at 52-393 (GKNEVLRFTQ…RGHARGKTVI (342 aa)). NADPH-binding residues include Ser214, Gly216, Val217, Ser237, Tyr255, Asn276, Leu300, Ala341, Phe343, His386, Ala387, and Arg388.

Belongs to the zinc-containing alcohol dehydrogenase family. Quinone oxidoreductase subfamily. In terms of assembly, interacts with RTN4, UQCRC1 and UQCRC2. Widely expressed in mitochondria-enriched tissues. Found in heart, muscle, kidney, liver, brain and placenta.

It localises to the mitochondrion matrix. The protein resides in the mitochondrion outer membrane. It carries out the reaction a 3-demethylubiquinone + NADH + 2 H(+) = a 3-demethylubiquinol + NAD(+). It catalyses the reaction a 3-demethylubiquinone + NADPH + 2 H(+) = a 3-demethylubiquinol + NADP(+). The enzyme catalyses 3-demethylubiquinone-10 + NADH + 2 H(+) = 3-demethylubiquinol-10 + NAD(+). The catalysed reaction is 3-demethylubiquinone-10 + NADPH + 2 H(+) = 3-demethylubiquinol-10 + NADP(+). Its pathway is cofactor biosynthesis; ubiquinone biosynthesis. Its function is as follows. NAD(P)H oxidoreductase involved in the ubiquinone biosynthetic pathway. Required for the O-methyltransferase activity of COQ3. Able to catalyze the oxidoreduction of 3-demethylubiquinone into 3-demethylubiquinol in vitro. However, it is unclear if 3-demethylubiquinone constitutes a substrate in vivo. May also play a role in the regulation of retinal ganglion cell (RGC) neurite outgrowth, and hence in the development of the inner retina and optic nerve. Appears to be a potent inhibitor of regeneration following spinal cord injury. This is NAD(P)H oxidoreductase RTN4IP1, mitochondrial from Homo sapiens (Human).